The primary structure comprises 177 residues: Dihydrofolate reductase type 9 (177 aa).

Residues 3–167 enclose the DHFR domain; sequence SLNMIVAVNK…TKLIFQIWIN (165 aa).

This sequence belongs to the dihydrofolate reductase family. As to quaternary structure, homodimer.

It catalyses the reaction (6S)-5,6,7,8-tetrahydrofolate + NADP(+) = 7,8-dihydrofolate + NADPH + H(+). The protein operates within cofactor biosynthesis; tetrahydrofolate biosynthesis; 5,6,7,8-tetrahydrofolate from 7,8-dihydrofolate: step 1/1. Its function is as follows. Key enzyme in folate metabolism. Catalyzes an essential reaction for de novo glycine and purine synthesis, and for DNA precursor synthesis. The sequence is that of Dihydrofolate reductase type 9 (dhfrIX) from Escherichia coli.